The primary structure comprises 130 residues: Small ribosomal subunit protein uS9 (130 aa).

The tract at residues 98-130 is disordered; it reads LKRAGMLTRDPRMKERKKPGLKGARRSPQFSKR. The span at 111 to 130 shows a compositional bias: basic residues; that stretch reads KERKKPGLKGARRSPQFSKR.

It belongs to the universal ribosomal protein uS9 family.

This chain is Small ribosomal subunit protein uS9, found in Macrococcus caseolyticus (strain JCSC5402) (Macrococcoides caseolyticum).